The following is a 308-amino-acid chain: Probable plastid-lipid-associated protein 9, chloroplastic (308 aa).

Residues 1-55 (MALIQHGSVSGTSAVRLSFSSSVSPPSSSPPLSRVSLNFQSEKKSCYRRMICRAM) constitute a chloroplast transit peptide.

Belongs to the PAP/fibrillin family.

The protein resides in the plastid. Its subcellular location is the chloroplast. It localises to the plastoglobule. In Arabidopsis thaliana (Mouse-ear cress), this protein is Probable plastid-lipid-associated protein 9, chloroplastic (PAP9).